The following is a 325-amino-acid chain: Heat-inducible transcription repressor HrcA (325 aa).

The protein belongs to the HrcA family.

Functionally, negative regulator of class I heat shock genes (grpE-dnaK-dnaJ and groELS operons). Prevents heat-shock induction of these operons. This Staphylococcus aureus (strain bovine RF122 / ET3-1) protein is Heat-inducible transcription repressor HrcA.